Reading from the N-terminus, the 892-residue chain is Alanine--tRNA ligase (892 aa).

Zn(2+)-binding residues include His-593, His-597, Cys-694, and His-698.

It belongs to the class-II aminoacyl-tRNA synthetase family. Requires Zn(2+) as cofactor.

Its subcellular location is the cytoplasm. The catalysed reaction is tRNA(Ala) + L-alanine + ATP = L-alanyl-tRNA(Ala) + AMP + diphosphate. Its function is as follows. Catalyzes the attachment of alanine to tRNA(Ala) in a two-step reaction: alanine is first activated by ATP to form Ala-AMP and then transferred to the acceptor end of tRNA(Ala). Also edits incorrectly charged Ser-tRNA(Ala) and Gly-tRNA(Ala) via its editing domain. The protein is Alanine--tRNA ligase of Helicobacter hepaticus (strain ATCC 51449 / 3B1).